The sequence spans 708 residues: Lactotransferrin (708 aa).

The signal sequence occupies residues 1–19 (MKLFVPALLSLGALGLCLA). Transferrin-like domains lie at 25-352 (VRWC…NLRE) and 364-693 (VVWC…NLKK). 2 disulfides stabilise this stretch: C28–C64 and C38–C55. D79 provides a ligand contact to Fe cation. The active site involves K92. Y111 contributes to the Fe cation binding site. 5 disulfide bridges follow: C134–C217, C176–C192, C179–C202, C189–C200, and C250–C264. Residues T136, R140, A142, and G143 each contribute to the hydrogencarbonate site. Y211 provides a ligand contact to Fe cation. N252 is a glycosylation site (N-linked (GlcNAc...) (high mannose) asparagine). H272 contributes to the Fe cation binding site. S278 (nucleophile) is an active-site residue. An N-linked (GlcNAc...) (hybrid) asparagine glycan is attached at N300. Disulfide bonds link C367/C399 and C377/C390. Positions 414 and 452 each coordinate Fe cation. 8 disulfides stabilise this stretch: C424-C703, C444-C666, C476-C551, C500-C694, C510-C524, C521-C534, C592-C606, and C644-C649. Residues T478, R482, A484, and G485 each contribute to the hydrogencarbonate site. N-linked (GlcNAc...) (complex) asparagine; alternate glycosylation is present at N495. N495 carries N-linked (GlcNAc...) (high mannose) asparagine; alternate glycosylation. N495 carries an N-linked (GlcNAc...) (hybrid) asparagine; alternate glycan. Y545 is a Fe cation binding site. An N-linked (GlcNAc...) (high mannose) asparagine glycan is attached at N564. Fe cation is bound at residue H614.

The protein belongs to the transferrin family. Monomer. Found in a complex with LTF, CLU, EPPIN and SEMG1. Found in a complex with MPO and LTF; interacts directly with CP, allows Fe(3+) incorporation into LTF and activation of CP ferroxidase activity. Poly-N-acetyllactosaminic carbohydrate moiety seems to be needed for TLR4 activation.

The protein resides in the secreted. It is found in the cytoplasmic granule. Transferrins are iron binding transport proteins which can bind two Fe(3+) ions in association with the binding of an anion, usually bicarbonate. Functionally, major iron-binding and multifunctional protein found in exocrine fluids such as breast milk and mucosal secretions. Has antimicrobial activity, which depends on the extracellular cation concentration. Antimicrobial properties include bacteriostasis, which is related to its ability to sequester free iron and thus inhibit microbial growth, as well as direct bactericidal properties leading to the release of lipopolysaccharides from the bacterial outer membrane. Can also prevent bacterial biofilm development in P.aeruginosa infection. Has weak antifungal activity against C.albicans. Has anabolic, differentiating and anti-apoptotic effects on osteoblasts and can also inhibit osteoclastogenesis, possibly playing a role in the regulation of bone growth. Promotes binding of species C adenoviruses to epithelial cells, promoting adenovirus infection. Can inhibit papillomavirus infections. Stimulates the TLR4 signaling pathway leading to NF-kappa-B activation and subsequent pro-inflammatory cytokine production while also interfering with the lipopolysaccharide (LPS)-stimulated TLR4 signaling. Inhibits neutrophil granulocyte migration to sites of apoptosis, when secreted by apoptotic cells. Stimulates VEGFA-mediated endothelial cell migration and proliferation. Binds heparin, chondroitin sulfate and possibly other glycosaminoglycans (GAGs). Also binds specifically to pneumococcal surface protein A (PspA), the lipid A portion of bacterial lipopolysaccharide (LPS), lysozyme and DNA. In terms of biological role, lactoferricin binds to the bacterial surface and is crucial for the bactericidal functions. Has some antiviral activity against papillomavirus infection. N-terminal region shows strong antifungal activity against C.albicans. Contains two BBXB heparin-binding consensus sequences that appear to form the predominate functional GAG-binding site. Its function is as follows. The lactotransferrin transferrin-like domain 1 functions as a serine protease of the peptidase S60 family that cuts arginine rich regions. This function contributes to the antimicrobial activity. Shows a preferential cleavage at -Arg-Ser-Arg-Arg-|- and -Arg-Arg-Ser-Arg-|-, and of Z-Phe-Arg-|-aminomethylcoumarin sites. In Bubalus bubalis (Domestic water buffalo), this protein is Lactotransferrin (LTF).